The following is a 70-amino-acid chain: DNA-directed RNA polymerase subunit epsilon (70 aa).

Belongs to the RNA polymerase subunit epsilon family. RNAP is composed of a core of 2 alpha, a beta and a beta' subunit. The core is associated with a delta subunit, and at least one of epsilon or omega. When a sigma factor is associated with the core the holoenzyme is formed, which can initiate transcription.

The enzyme catalyses RNA(n) + a ribonucleoside 5'-triphosphate = RNA(n+1) + diphosphate. Functionally, a non-essential component of RNA polymerase (RNAP). In Enterococcus faecalis (strain ATCC 700802 / V583), this protein is DNA-directed RNA polymerase subunit epsilon.